Consider the following 175-residue polypeptide: uncharacterized protein (175 aa).

Residues 113-175 (AQLPRDSRGN…RTRSGGLERL (63 aa)) form a disordered region.

This is an uncharacterized protein from Bos taurus (Bovine).